Consider the following 315-residue polypeptide: Methionyl-tRNA formyltransferase (315 aa).

A (6S)-5,6,7,8-tetrahydrofolate-binding site is contributed by 113–116 (SLLP).

It belongs to the Fmt family.

The catalysed reaction is L-methionyl-tRNA(fMet) + (6R)-10-formyltetrahydrofolate = N-formyl-L-methionyl-tRNA(fMet) + (6S)-5,6,7,8-tetrahydrofolate + H(+). Functionally, attaches a formyl group to the free amino group of methionyl-tRNA(fMet). The formyl group appears to play a dual role in the initiator identity of N-formylmethionyl-tRNA by promoting its recognition by IF2 and preventing the misappropriation of this tRNA by the elongation apparatus. This chain is Methionyl-tRNA formyltransferase, found in Photorhabdus laumondii subsp. laumondii (strain DSM 15139 / CIP 105565 / TT01) (Photorhabdus luminescens subsp. laumondii).